A 1329-amino-acid chain; its full sequence is Putative protein tag-53 (1329 aa).

Residues 65–92 (SCDKPCYNGVCLNKACVCSKGWYGSQCD) enclose the EGF-like 1 domain. Disulfide bonds link Cys-66–Cys-75, Cys-70–Cys-80, Cys-82–Cys-91, Cys-94–Cys-120, and Cys-144–Cys-166. Residues 94–203 (CFGRIRISDN…NGFNVSYESN (110 aa)) form the CUB domain. N-linked (GlcNAc...) asparagine glycosylation is present at Asn-103. Residues Asn-197 and Asn-208 are each glycosylated (N-linked (GlcNAc...) asparagine). 2 consecutive EGF-like domains span residues 204–232 (RCAY…LNCE) and 235–270 (VCQL…ETCQ). 6 disulfides stabilise this stretch: Cys-205-Cys-215, Cys-209-Cys-220, Cys-222-Cys-231, Cys-236-Cys-252, Cys-247-Cys-257, and Cys-259-Cys-269. 6 Kelch repeats span residues 302–353 (VVWS…KYKN), 355–408 (LYMF…VAGH), 416–463 (EMFV…AVEY), 471–518 (AILV…YLNG), 520–575 (MVVV…VIGQ), and 577–619 (LYAL…KCVF). Residues Asn-324, Asn-395, Asn-447, Asn-481, Asn-529, and Asn-555 are each glycosylated (N-linked (GlcNAc...) asparagine). A glycan (N-linked (GlcNAc...) asparagine) is linked at Asn-820. Residue Asn-832 is glycosylated (N-linked (GlcNAc...) asparagine; atypical). N-linked (GlcNAc...) asparagine glycosylation is found at Asn-833 and Asn-934. 8 cysteine pairs are disulfide-bonded: Cys-945-Cys-953, Cys-947-Cys-968, Cys-971-Cys-980, Cys-983-Cys-997, Cys-1000-Cys-1009, Cys-1002-Cys-1016, Cys-1018-Cys-1028, and Cys-1031-Cys-1045. Laminin EGF-like domains lie at 945-999 (CQCN…VCSP) and 1000-1047 (CDCH…PCFY). Residues 952–998 (TCFTSVGSFPPVTIEKCQSCQNHTTGAHCERCAPGFYGDARNGGVCS) enclose the EGF-like 4 domain. The N-linked (GlcNAc...) asparagine glycan is linked to Asn-973. Asn-1066, Asn-1102, and Asn-1147 each carry an N-linked (GlcNAc...) asparagine glycan. A helical transmembrane segment spans residues 1176 to 1196 (VLFFVIFAACFIVLLVVAGLL). The Cytoplasmic segment spans residues 1197 to 1329 (WMIKVRIEAY…TIRQRPNNND (133 aa)).

It is found in the membrane. This Caenorhabditis elegans protein is Putative protein tag-53 (tag-53).